The primary structure comprises 136 residues: General odorant-binding protein 57d (136 aa).

Positions 1–29 are cleaved as a signal peptide; that stretch reads MPEKMSLRLVPHLACIIFILEIQFRIADS. Intrachain disulfides connect Cys33–Cys70, Cys66–Cys118, and Cys107–Cys127.

It belongs to the PBP/GOBP family.

Present in the aqueous fluid surrounding olfactory sensory dendrites and are thought to aid in the capture and transport of hydrophobic odorants into and through this fluid. This is General odorant-binding protein 57d from Drosophila melanogaster (Fruit fly).